We begin with the raw amino-acid sequence, 66 residues long: Potassium channel toxin alpha-KTx 30.1 (66 aa).

Positions 1-24 (MNTGFFFFVIMATGLVLTFDTIHA) are cleaved as a signal peptide. 3 disulfides stabilise this stretch: Cys30–Cys50, Cys36–Cys55, and Cys40–Cys57.

Belongs to the short scorpion toxin superfamily. Potassium channel inhibitor family. Alpha-KTx 30 subfamily. Expressed by the venom gland.

It localises to the secreted. Its function is as follows. inhibits Kv1.3/KCNA3 channel (1 uM of the toxin inhibits currents by 64.1%). The chain is Potassium channel toxin alpha-KTx 30.1 from Scorpiops margerisonae (Scorpion).